A 457-amino-acid polypeptide reads, in one-letter code: Argininosuccinate lyase (457 aa).

The protein belongs to the lyase 1 family. Argininosuccinate lyase subfamily.

The protein resides in the cytoplasm. It carries out the reaction 2-(N(omega)-L-arginino)succinate = fumarate + L-arginine. It participates in amino-acid biosynthesis; L-arginine biosynthesis; L-arginine from L-ornithine and carbamoyl phosphate: step 3/3. The polypeptide is Argininosuccinate lyase (Yersinia pseudotuberculosis serotype IB (strain PB1/+)).